A 388-amino-acid polypeptide reads, in one-letter code: LL-diaminopimelate aminotransferase (388 aa).

Substrate is bound by residues Y13, G38, K102, Y126, and N176. Residues 101-102 (SK), Y126, N176, Y207, and 235-237 (SLS) contribute to the pyridoxal 5'-phosphate site. K238 carries the N6-(pyridoxal phosphate)lysine modification. Pyridoxal 5'-phosphate is bound at residue R246. R364 contributes to the substrate binding site.

It belongs to the class-I pyridoxal-phosphate-dependent aminotransferase family. LL-diaminopimelate aminotransferase subfamily. As to quaternary structure, homodimer. The cofactor is pyridoxal 5'-phosphate.

It catalyses the reaction (2S,6S)-2,6-diaminopimelate + 2-oxoglutarate = (S)-2,3,4,5-tetrahydrodipicolinate + L-glutamate + H2O + H(+). Its pathway is amino-acid biosynthesis; L-lysine biosynthesis via DAP pathway; LL-2,6-diaminopimelate from (S)-tetrahydrodipicolinate (aminotransferase route): step 1/1. Functionally, involved in the synthesis of meso-diaminopimelate (m-DAP or DL-DAP), required for both lysine and peptidoglycan biosynthesis. Catalyzes the direct conversion of tetrahydrodipicolinate to LL-diaminopimelate. This is LL-diaminopimelate aminotransferase from Dehalococcoides mccartyi (strain CBDB1).